We begin with the raw amino-acid sequence, 61 residues long: MAKLSKIAQAKRKPKFSVRQYNRCPLCGRPRAFLRKFKMCRICLRNRALRGEVTGVTKSSW.

Cysteine 24, cysteine 27, cysteine 40, and cysteine 43 together coordinate Zn(2+).

The protein belongs to the universal ribosomal protein uS14 family. Zinc-binding uS14 subfamily. In terms of assembly, part of the 30S ribosomal subunit. Contacts proteins S3 and S10. It depends on Zn(2+) as a cofactor.

In terms of biological role, binds 16S rRNA, required for the assembly of 30S particles and may also be responsible for determining the conformation of the 16S rRNA at the A site. In Myxococcus xanthus (strain DK1622), this protein is Small ribosomal subunit protein uS14B.